A 109-amino-acid chain; its full sequence is Phosphoribosyl-AMP cyclohydrolase (109 aa).

Asp80 provides a ligand contact to Mg(2+). Cys81 lines the Zn(2+) pocket. Residues Asp82 and Asp84 each contribute to the Mg(2+) site. The Zn(2+) site is built by Cys97 and Cys104.

It belongs to the PRA-CH family. In terms of assembly, homodimer. Requires Mg(2+) as cofactor. It depends on Zn(2+) as a cofactor.

It localises to the cytoplasm. It catalyses the reaction 1-(5-phospho-beta-D-ribosyl)-5'-AMP + H2O = 1-(5-phospho-beta-D-ribosyl)-5-[(5-phospho-beta-D-ribosylamino)methylideneamino]imidazole-4-carboxamide. It functions in the pathway amino-acid biosynthesis; L-histidine biosynthesis; L-histidine from 5-phospho-alpha-D-ribose 1-diphosphate: step 3/9. Functionally, catalyzes the hydrolysis of the adenine ring of phosphoribosyl-AMP. The sequence is that of Phosphoribosyl-AMP cyclohydrolase from Clostridium beijerinckii (strain ATCC 51743 / NCIMB 8052) (Clostridium acetobutylicum).